Consider the following 161-residue polypeptide: ATP synthase subunit b (161 aa).

A helical transmembrane segment spans residues 11–31 (AISFVLFVWFCMKYIWPPIIL).

This sequence belongs to the ATPase B chain family. F-type ATPases have 2 components, F(1) - the catalytic core - and F(0) - the membrane proton channel. F(1) has five subunits: alpha(3), beta(3), gamma(1), delta(1), epsilon(1). F(0) has three main subunits: a(1), b(2) and c(10-14). The alpha and beta chains form an alternating ring which encloses part of the gamma chain. F(1) is attached to F(0) by a central stalk formed by the gamma and epsilon chains, while a peripheral stalk is formed by the delta and b chains.

It localises to the cell membrane. Its function is as follows. F(1)F(0) ATP synthase produces ATP from ADP in the presence of a proton or sodium gradient. F-type ATPases consist of two structural domains, F(1) containing the extramembraneous catalytic core and F(0) containing the membrane proton channel, linked together by a central stalk and a peripheral stalk. During catalysis, ATP synthesis in the catalytic domain of F(1) is coupled via a rotary mechanism of the central stalk subunits to proton translocation. Component of the F(0) channel, it forms part of the peripheral stalk, linking F(1) to F(0). The protein is ATP synthase subunit b of Buchnera aphidicola subsp. Acyrthosiphon pisum (strain APS) (Acyrthosiphon pisum symbiotic bacterium).